Here is a 204-residue protein sequence, read N- to C-terminus: Small ribosomal subunit protein uS7 (204 aa).

It belongs to the universal ribosomal protein uS7 family. Part of the 30S ribosomal subunit.

In terms of biological role, one of the primary rRNA binding proteins, it binds directly to 16S rRNA where it nucleates assembly of the head domain of the 30S subunit. Is located at the subunit interface close to the decoding center. In Methanoregula boonei (strain DSM 21154 / JCM 14090 / 6A8), this protein is Small ribosomal subunit protein uS7.